An 86-amino-acid chain; its full sequence is Small ribosomal subunit protein bS20 (86 aa).

It belongs to the bacterial ribosomal protein bS20 family.

Its function is as follows. Binds directly to 16S ribosomal RNA. The sequence is that of Small ribosomal subunit protein bS20 from Novosphingobium aromaticivorans (strain ATCC 700278 / DSM 12444 / CCUG 56034 / CIP 105152 / NBRC 16084 / F199).